Consider the following 312-residue polypeptide: Ribosomal protein L11 methyltransferase (312 aa).

Threonine 163, glycine 184, aspartate 206, and asparagine 248 together coordinate S-adenosyl-L-methionine.

It belongs to the methyltransferase superfamily. PrmA family.

It is found in the cytoplasm. The catalysed reaction is L-lysyl-[protein] + 3 S-adenosyl-L-methionine = N(6),N(6),N(6)-trimethyl-L-lysyl-[protein] + 3 S-adenosyl-L-homocysteine + 3 H(+). Methylates ribosomal protein L11. This chain is Ribosomal protein L11 methyltransferase, found in Clostridium botulinum (strain Hall / ATCC 3502 / NCTC 13319 / Type A).